The chain runs to 314 residues: Glutathione synthetase (314 aa).

Positions 125–309 constitute an ATP-grasp domain; the sequence is KLFVMNFPQL…VAAKVWDTIE (185 aa). Position 151–207 (151–207) interacts with ATP; the sequence is RDKHGAVVMKPLHGHGGAAVFRVMPQDMNFGSLFDMFTVTFKEPWVIQQFIPEVKHG. The Mg(2+) site is built by Glu-280 and Asn-282.

It belongs to the prokaryotic GSH synthase family. Mg(2+) is required as a cofactor. The cofactor is Mn(2+).

It catalyses the reaction gamma-L-glutamyl-L-cysteine + glycine + ATP = glutathione + ADP + phosphate + H(+). The protein operates within sulfur metabolism; glutathione biosynthesis; glutathione from L-cysteine and L-glutamate: step 2/2. The polypeptide is Glutathione synthetase (Bradyrhizobium diazoefficiens (strain JCM 10833 / BCRC 13528 / IAM 13628 / NBRC 14792 / USDA 110)).